The sequence spans 197 residues: Imidazoleglycerol-phosphate dehydratase (197 aa).

Belongs to the imidazoleglycerol-phosphate dehydratase family.

It is found in the cytoplasm. It carries out the reaction D-erythro-1-(imidazol-4-yl)glycerol 3-phosphate = 3-(imidazol-4-yl)-2-oxopropyl phosphate + H2O. It participates in amino-acid biosynthesis; L-histidine biosynthesis; L-histidine from 5-phospho-alpha-D-ribose 1-diphosphate: step 6/9. The sequence is that of Imidazoleglycerol-phosphate dehydratase from Rhodopseudomonas palustris (strain TIE-1).